A 464-amino-acid chain; its full sequence is Cysteine--tRNA ligase (464 aa).

Position 32 (Cys32) interacts with Zn(2+). A 'HIGH' region motif is present at residues 34-44 (VTVYDDCHIGH). The Zn(2+) site is built by Cys213, His238, and Glu242. Positions 270-274 (KMSKS) match the 'KMSKS' region motif. Lys273 is a binding site for ATP.

This sequence belongs to the class-I aminoacyl-tRNA synthetase family. In terms of assembly, monomer. Zn(2+) serves as cofactor.

The protein resides in the cytoplasm. The enzyme catalyses tRNA(Cys) + L-cysteine + ATP = L-cysteinyl-tRNA(Cys) + AMP + diphosphate. This is Cysteine--tRNA ligase from Francisella tularensis subsp. tularensis (strain SCHU S4 / Schu 4).